A 547-amino-acid chain; its full sequence is Chaperonin GroEL (547 aa).

Residues 30-33 (TLGP), lysine 51, 87-91 (DGTTT), glycine 415, 480-482 (NAA), and aspartate 496 contribute to the ATP site. The tract at residues 525–547 (KPDDKPAMPPMGGGMGGMGGMDF) is disordered. A compositionally biased stretch (gly residues) spans 535 to 547 (MGGGMGGMGGMDF).

It belongs to the chaperonin (HSP60) family. As to quaternary structure, forms a cylinder of 14 subunits composed of two heptameric rings stacked back-to-back. Interacts with the co-chaperonin GroES.

The protein localises to the cytoplasm. It carries out the reaction ATP + H2O + a folded polypeptide = ADP + phosphate + an unfolded polypeptide.. In terms of biological role, together with its co-chaperonin GroES, plays an essential role in assisting protein folding. The GroEL-GroES system forms a nano-cage that allows encapsulation of the non-native substrate proteins and provides a physical environment optimized to promote and accelerate protein folding. The polypeptide is Chaperonin GroEL (Novosphingobium aromaticivorans (strain ATCC 700278 / DSM 12444 / CCUG 56034 / CIP 105152 / NBRC 16084 / F199)).